The sequence spans 918 residues: Cap-specific mRNA (nucleoside-2'-O-)-methyltransferase 1 (918 aa).

Residues 1-18 (MADRKSDEGEDEYQHKEQ) show a composition bias toward basic and acidic residues. Disordered stretches follow at residues 1–56 (MADR…EERA) and 62–81 (KRGYQAGDDEEDDFTAEEEP). The segment covering 19-30 (MVTNRTSSFQPK) has biased composition (polar residues). Residues 43 to 56 (RAADRREEFMEERA) show a composition bias toward basic and acidic residues. Over residues 68–80 (GDDEEDDFTAEEE) the composition is skewed to acidic residues. Positions 86 to 132 (PLTVAERLMAAMGHKAGEGLGKHGQGISEPIASSTQRGRTGLGHNAG) constitute a G-patch domain. Residues 236-465 (FFQNRAAMKT…ERYITCKGLR (230 aa)) form the RrmJ-type SAM-dependent 2'-O-MTase domain. 2 residues coordinate S-adenosyl-L-methionine: Gly298 and Asp379. Lys419 (proton acceptor) is an active-site residue.

The catalysed reaction is a 5'-end (N(7)-methyl 5'-triphosphoguanosine)-ribonucleoside in mRNA + S-adenosyl-L-methionine = a 5'-end (N(7)-methyl 5'-triphosphoguanosine)-(2'-O-methyl-ribonucleoside) in mRNA + S-adenosyl-L-homocysteine + H(+). S-adenosyl-L-methionine-dependent methyltransferase that mediates mRNA cap1 2'-O-ribose methylation to the 5'-cap structure of mRNAs. Methylates the ribose of the first nucleotide of a m(7)GpppG-capped mRNA to produce m(7)GpppNmp (cap1). Cap1 modification is linked to higher levels of translation. The chain is Cap-specific mRNA (nucleoside-2'-O-)-methyltransferase 1 from Caenorhabditis elegans.